The primary structure comprises 754 residues: 5-methyltetrahydropteroyltriglutamate--homocysteine methyltransferase (754 aa).

Residues Arg15–Lys18 and Lys114 each bind 5-methyltetrahydropteroyltri-L-glutamate. L-homocysteine-binding positions include Ile430–Ser432 and Glu483. L-methionine contacts are provided by residues Ile430 to Ser432 and Glu483. 5-methyltetrahydropteroyltri-L-glutamate is bound by residues Arg514 to Cys515 and Trp560. Asp598 lines the L-homocysteine pocket. Asp598 is an L-methionine binding site. Glu604 contacts 5-methyltetrahydropteroyltri-L-glutamate. His641, Cys643, and Glu665 together coordinate Zn(2+). His694 (proton donor) is an active-site residue. Residue Cys726 coordinates Zn(2+).

The protein belongs to the vitamin-B12 independent methionine synthase family. It depends on Zn(2+) as a cofactor.

It catalyses the reaction 5-methyltetrahydropteroyltri-L-glutamate + L-homocysteine = tetrahydropteroyltri-L-glutamate + L-methionine. It functions in the pathway amino-acid biosynthesis; L-methionine biosynthesis via de novo pathway; L-methionine from L-homocysteine (MetE route): step 1/1. Its function is as follows. Catalyzes the transfer of a methyl group from 5-methyltetrahydrofolate to homocysteine resulting in methionine formation. The protein is 5-methyltetrahydropteroyltriglutamate--homocysteine methyltransferase of Campylobacter jejuni subsp. doylei (strain ATCC BAA-1458 / RM4099 / 269.97).